A 162-amino-acid chain; its full sequence is Regulatory protein RecX (162 aa).

Belongs to the RecX family.

The protein resides in the cytoplasm. Modulates RecA activity. The protein is Regulatory protein RecX of Xanthomonas axonopodis pv. citri (strain 306).